The sequence spans 307 residues: uncharacterized protein (307 aa).

This is an uncharacterized protein from Rickettsia conorii (strain ATCC VR-613 / Malish 7).